An 81-amino-acid polypeptide reads, in one-letter code: Protein Vpu (81 aa).

Over Met1–Ile7 the chain is Extracellular. A helical membrane pass occupies residues Ala8–Ile28. The Cytoplasmic portion of the chain corresponds to Glu29 to Leu81. Phosphoserine; by host CK2 occurs at positions 53 and 57.

This sequence belongs to the HIV-1 VPU protein family. Homopentamer. Interacts with host CD4 and BRTC; these interactions induce proteasomal degradation of CD4. Interacts with host BST2; this interaction leads to the degradation of host BST2. Interacts with host FBXW11. Interacts with host AP1M1; this interaction plays a role in the mistrafficking and subsequent degradation of host BST2. Interacts with host RANBP2; this interaction allows Vpu to down-regulate host BLM sumoylation. Phosphorylated by host CK2. This phosphorylation is necessary for interaction with human BTRC and degradation of CD4.

The protein localises to the host membrane. Ion channel activity is inhibited by hexamethylene amiloride in vitro. Functionally, enhances virion budding by targeting host CD4 and Tetherin/BST2 to proteasome degradation. Degradation of CD4 prevents any unwanted premature interactions between viral Env and its host receptor CD4 in the endoplasmic reticulum. Degradation of antiretroviral protein Tetherin/BST2 is important for virion budding, as BST2 tethers new viral particles to the host cell membrane. Mechanistically, Vpu bridges either CD4 or BST2 to BTRC, a substrate recognition subunit of the Skp1/Cullin/F-box protein E3 ubiquitin ligase, induces their ubiquitination and subsequent proteasomal degradation. The alteration of the E3 ligase specificity by Vpu seems to promote the degradation of host IKBKB, leading to NF-kappa-B down-regulation and subsequent apoptosis. Acts as a viroporin that forms an oligomeric ion channel in membranes. Modulates the host DNA repair mechanisms to promote degradation of nuclear viral cDNA in cells that are already productively infected in order to suppress immune sensing and proviral hyper-integration (superinfection). Manipulates PML-NBs and modulates SUMOylation of host BLM protein thereby enhancing its DNA-end processing activity toward viral unintegrated linear DNA. Also inhibits RAD52-mediated homologous repair of viral cDNA, preventing the generation of dead-end circular forms of single copies of the long terminal repeat and permitting sustained nucleolytic attack. In Homo sapiens (Human), this protein is Protein Vpu.